The sequence spans 132 residues: Small ribosomal subunit protein uS11 (132 aa).

This sequence belongs to the universal ribosomal protein uS11 family. In terms of assembly, part of the 30S ribosomal subunit. Interacts with proteins S7 and S18. Binds to IF-3.

In terms of biological role, located on the platform of the 30S subunit, it bridges several disparate RNA helices of the 16S rRNA. Forms part of the Shine-Dalgarno cleft in the 70S ribosome. This is Small ribosomal subunit protein uS11 from Alcanivorax borkumensis (strain ATCC 700651 / DSM 11573 / NCIMB 13689 / SK2).